Reading from the N-terminus, the 174-residue chain is I-Kappa-B like protein C1 (174 aa).

ANK repeat units follow at residues Arg56–Ala88 and Thr93–Ala123.

Belongs to the polydnaviridae I-Kappa-B-like protein family.

Its function is as follows. Suppresses the host immune response through NF-kappa-B inactivation. Possesses ankyrin repeat domains required for NF-kappa-B binding but lacks the regulatory regions required for dissociation from NF-kappa-B and degradation. Therefore, prevents host NF-kappa-B release and subsequent activation. This Microplitis demolitor bracovirus (isolate Webb) (MdBV) protein is I-Kappa-B like protein C1 (C1).